A 511-amino-acid polypeptide reads, in one-letter code: MIHDMIKTIEHFAETQADFPVYDILGEVHTYGQLKVDSDSLAAHIDSLGLVEKSPVLVFGGQEYEMLATFVALTKSGHAYIPVDQHSALDRIQAIMTVAQPSLIISIGEFPLEVDNVPILDVSQVSAIFEEKTPYEVTHSVKGDDNYYIIFTSGTTGLPKGVQISHDNLLSFTNWMISDDEFSVPERPQMLAQPPYSFDLSVMYWAPTLAMGGTLFALPKTVVNDFKKLFATINELPVQVWTSTPSFADMALLSNDFNSETLPQLTHFYFDGEELTVKTAQKLRQRFPKARIVNAYGPTEATVALSAVAITDEMLETCKRLPIGYTKDDSPTYVIDEEGHKLPNGEQGEIIIAGPAVSKGYLNNPEKTAEAFFQFEGLPAYHTGDLGSMTDEGLLLYGGRMDFQIKFNGYRIELEDVSQNLNKSQYVKSAVAVPRYNKDHKVQNLLAYIVLKEGVRDDFERDLDLTKAIKEDLKDIMMDYMMPSKFIYREDLPLTPNGKIDIKGLMSEVNK.

Residue 152–153 coordinates ATP; sequence TS. Asp199 lines the D-alanine pocket. 294–299 is a binding site for ATP; sequence NAYGPT. Position 303 (Val303) interacts with D-alanine. ATP contacts are provided by residues Asp385, 397-400, and Lys499; that span reads YGGR. Lys499 is a D-alanine binding site.

The protein belongs to the ATP-dependent AMP-binding enzyme family. DltA subfamily.

Its subcellular location is the cytoplasm. The catalysed reaction is holo-[D-alanyl-carrier protein] + D-alanine + ATP = D-alanyl-[D-alanyl-carrier protein] + AMP + diphosphate. It participates in cell wall biogenesis; lipoteichoic acid biosynthesis. Catalyzes the first step in the D-alanylation of lipoteichoic acid (LTA), the activation of D-alanine and its transfer onto the D-alanyl carrier protein (Dcp) DltC. In an ATP-dependent two-step reaction, forms a high energy D-alanyl-AMP intermediate, followed by transfer of the D-alanyl residue as a thiol ester to the phosphopantheinyl prosthetic group of the Dcp. D-alanylation of LTA plays an important role in modulating the properties of the cell wall in Gram-positive bacteria, influencing the net charge of the cell wall. The sequence is that of D-alanine--D-alanyl carrier protein ligase from Streptococcus agalactiae serotype III (strain NEM316).